A 657-amino-acid polypeptide reads, in one-letter code: tRNA uridine 5-carboxymethylaminomethyl modification enzyme MnmG (657 aa).

Residue 13-18 (GGGHAG) participates in FAD binding. 281–295 (GPRYCPSVEDKINRF) lines the NAD(+) pocket.

The protein belongs to the MnmG family. As to quaternary structure, homodimer. Heterotetramer of two MnmE and two MnmG subunits. The cofactor is FAD.

The protein resides in the cytoplasm. Functionally, NAD-binding protein involved in the addition of a carboxymethylaminomethyl (cmnm) group at the wobble position (U34) of certain tRNAs, forming tRNA-cmnm(5)s(2)U34. This is tRNA uridine 5-carboxymethylaminomethyl modification enzyme MnmG from Acidovorax ebreus (strain TPSY) (Diaphorobacter sp. (strain TPSY)).